The sequence spans 360 residues: Ankyrin repeat domain-containing protein 2 (360 aa).

Residues 5–120 (PSWAGVGALA…GIQNLIELRK (116 aa)) are may mediate interaction with PML, p53/TP53 and YBX1. The residue at position 99 (serine 99) is a Phosphoserine; by PKB/AKT2. Residues 126–147 (KRDALAASHEPPPEPEEITGPV) form a disordered region. Acidic residues predominate over residues 138–147 (PEPEEITGPV). ANK repeat units follow at residues 147-176 (VDEE…SADT), 180-209 (FRRT…TVDF), 213-242 (LDCT…DTNV), 246-275 (LLST…EINA), and 279-308 (EGDT…DMMT). The span at 330-342 (ALEHPEPGAEHNG) shows a compositional bias: basic and acidic residues. The tract at residues 330–360 (ALEHPEPGAEHNGLEGPNDSGRETPQPVPAQ) is disordered.

Interacts with ID3; both proteins cooperate in myoblast differentiation. Interacts with TTN/titin. Interacts (via ANK repeats) with TCAP; the interaction is direct. Interacts with TJP1 (via PDZ domains). Interacts with PML; the interaction is direct. Interacts with p53/TP53. Interacts with YBX1. Interacts with AKT2. In terms of processing, phosphorylation at Ser-99 by PKB/AKT2 in response to oxidative stress induces translocation to the nucleus and negatively regulates myoblast differentiation. As to expression, mostly expressed in skeletal and cardiac muscles. Found in slow fibers. Also expressed in kidney, but to a lower extent (at protein level).

Its subcellular location is the cytoplasm. It is found in the myofibril. The protein localises to the sarcomere. It localises to the i band. The protein resides in the cytosol. Its subcellular location is the nucleus. It is found in the PML body. Functions as a negative regulator of myocyte differentiation. May interact with both sarcoplasmic structural proteins and nuclear proteins to regulate gene expression during muscle development and in response to muscle stress. This chain is Ankyrin repeat domain-containing protein 2 (ANKRD2), found in Homo sapiens (Human).